A 382-amino-acid chain; its full sequence is C-type lectin domain-containing protein 38 (382 aa).

The Cytoplasmic portion of the chain corresponds to 1 to 40 (MAIFYDDPLERLNQPIKTKSYRKKQVVQRVHVFIFDNWKL). A helical membrane pass occupies residues 41–61 (ILLGILNLIFLIIAIVFAILF). Residues 62-382 (FVGSADCAQL…FFLCKRAIDF (321 aa)) are Extracellular-facing. Positions 97–116 (NAITTTQGTPSNKTSTTTPS) are disordered. The segment covering 100-116 (TTTQGTPSNKTSTTTPS) has biased composition (low complexity). 2 N-linked (GlcNAc...) asparagine glycosylation sites follow: asparagine 108 and asparagine 189. C-type lectin domains follow at residues 129–250 (VGTK…FVCE) and 264–377 (YNKN…FLCK). 4 cysteine pairs are disulfide-bonded: cysteine 150–cysteine 249, cysteine 223–cysteine 241, cysteine 285–cysteine 376, and cysteine 348–cysteine 368.

In terms of tissue distribution, expressed in ventral cord motor neurons and PLM touch neurons.

The protein resides in the membrane. Its function is as follows. Involved in negative modulation of unc-40-mediated axon outgrowth. Required for proper presynaptic development in axons that have reached their targets. May function in concert with E3 ubiquitin-protein ligase rpm-1 in regulating axon outgrowth. The polypeptide is C-type lectin domain-containing protein 38 (Caenorhabditis elegans).